Here is a 281-residue protein sequence, read N- to C-terminus: Shikimate dehydrogenase (NADP(+)) (281 aa).

Shikimate contacts are provided by residues 14-16 and T61; that span reads SKS. The Proton acceptor role is filled by K65. Shikimate-binding residues include N86 and D105. NADP(+)-binding positions include 130–134, 154–159, and M221; these read GAGGA and NRTAAK. Y223 lines the shikimate pocket. NADP(+) is bound at residue G245.

It belongs to the shikimate dehydrogenase family. Homodimer.

It carries out the reaction shikimate + NADP(+) = 3-dehydroshikimate + NADPH + H(+). It functions in the pathway metabolic intermediate biosynthesis; chorismate biosynthesis; chorismate from D-erythrose 4-phosphate and phosphoenolpyruvate: step 4/7. Functionally, involved in the biosynthesis of the chorismate, which leads to the biosynthesis of aromatic amino acids. Catalyzes the reversible NADPH linked reduction of 3-dehydroshikimate (DHSA) to yield shikimate (SA). The protein is Shikimate dehydrogenase (NADP(+)) of Azoarcus sp. (strain BH72).